A 218-amino-acid chain; its full sequence is Thiamine-phosphate synthase (218 aa).

4-amino-2-methyl-5-(diphosphooxymethyl)pyrimidine is bound by residues 45 to 49 (QYREK) and asparagine 77. 2 residues coordinate Mg(2+): aspartate 78 and aspartate 97. Serine 116 is a binding site for 4-amino-2-methyl-5-(diphosphooxymethyl)pyrimidine. 142–144 (TKT) lines the 2-[(2R,5Z)-2-carboxy-4-methylthiazol-5(2H)-ylidene]ethyl phosphate pocket. Residue lysine 145 coordinates 4-amino-2-methyl-5-(diphosphooxymethyl)pyrimidine. Residues glycine 173 and 193–194 (VT) each bind 2-[(2R,5Z)-2-carboxy-4-methylthiazol-5(2H)-ylidene]ethyl phosphate.

This sequence belongs to the thiamine-phosphate synthase family. Requires Mg(2+) as cofactor.

It catalyses the reaction 2-[(2R,5Z)-2-carboxy-4-methylthiazol-5(2H)-ylidene]ethyl phosphate + 4-amino-2-methyl-5-(diphosphooxymethyl)pyrimidine + 2 H(+) = thiamine phosphate + CO2 + diphosphate. The catalysed reaction is 2-(2-carboxy-4-methylthiazol-5-yl)ethyl phosphate + 4-amino-2-methyl-5-(diphosphooxymethyl)pyrimidine + 2 H(+) = thiamine phosphate + CO2 + diphosphate. The enzyme catalyses 4-methyl-5-(2-phosphooxyethyl)-thiazole + 4-amino-2-methyl-5-(diphosphooxymethyl)pyrimidine + H(+) = thiamine phosphate + diphosphate. Its pathway is cofactor biosynthesis; thiamine diphosphate biosynthesis; thiamine phosphate from 4-amino-2-methyl-5-diphosphomethylpyrimidine and 4-methyl-5-(2-phosphoethyl)-thiazole: step 1/1. Its function is as follows. Condenses 4-methyl-5-(beta-hydroxyethyl)thiazole monophosphate (THZ-P) and 2-methyl-4-amino-5-hydroxymethyl pyrimidine pyrophosphate (HMP-PP) to form thiamine monophosphate (TMP). In Pelotomaculum thermopropionicum (strain DSM 13744 / JCM 10971 / SI), this protein is Thiamine-phosphate synthase.